Here is a 106-residue protein sequence, read N- to C-terminus: CRISPR-associated endoribonuclease Cas2 (106 aa).

Asp8 contributes to the Mg(2+) binding site. The interval 86-106 is disordered; that stretch reads EEAAEAAVSYPGRSRKKARAG.

It belongs to the CRISPR-associated endoribonuclease Cas2 protein family. As to quaternary structure, homodimer, forms a heterotetramer with a Cas1 homodimer. Mg(2+) is required as a cofactor.

In terms of biological role, CRISPR (clustered regularly interspaced short palindromic repeat), is an adaptive immune system that provides protection against mobile genetic elements (viruses, transposable elements and conjugative plasmids). CRISPR clusters contain sequences complementary to antecedent mobile elements and target invading nucleic acids. CRISPR clusters are transcribed and processed into CRISPR RNA (crRNA). Functions as a ssRNA-specific endoribonuclease. Involved in the integration of spacer DNA into the CRISPR cassette. The chain is CRISPR-associated endoribonuclease Cas2 from Desulforudis audaxviator (strain MP104C).